The following is a 181-amino-acid chain: Probable nicotinate-nucleotide adenylyltransferase (181 aa).

This sequence belongs to the NadD family.

It carries out the reaction nicotinate beta-D-ribonucleotide + ATP + H(+) = deamido-NAD(+) + diphosphate. It functions in the pathway cofactor biosynthesis; NAD(+) biosynthesis; deamido-NAD(+) from nicotinate D-ribonucleotide: step 1/1. Its function is as follows. Catalyzes the reversible adenylation of nicotinate mononucleotide (NaMN) to nicotinic acid adenine dinucleotide (NaAD). The polypeptide is Probable nicotinate-nucleotide adenylyltransferase (Campylobacter fetus subsp. fetus (strain 82-40)).